A 172-amino-acid polypeptide reads, in one-letter code: Centrin-2 (172 aa).

The span at 1–14 (MASNFKKTTMASSA) shows a compositional bias: polar residues. Positions 1 to 31 (MASNFKKTTMASSAQRKRMSPKPELTEDQKQ) are disordered. The residue at position 2 (alanine 2) is an N-acetylalanine. Positions 2–25 (ASNFKKTTMASSAQRKRMSPKPEL) are required for self-assembly. At serine 20 the chain carries Phosphoserine. Lysine 22 is covalently cross-linked (Glycyl lysine isopeptide (Lys-Gly) (interchain with G-Cter in SUMO2)). Residue threonine 26 is modified to Phosphothreonine. EF-hand domains lie at 28–63 (DQKQ…LGFE), 64–99 (PKKE…KMSE), 101–136 (DTKE…LGEN), and 137–172 (LTDE…TSLY). Ca(2+) is bound by residues aspartate 41, aspartate 43, threonine 45, threonine 47, and glutamate 52. Residues aspartate 150, aspartate 152, aspartate 154, glutamate 156, and glutamate 161 each contribute to the Ca(2+) site.

The protein belongs to the centrin family. As to quaternary structure, monomer. Homooligomer. Interacts with CCP110, SFI1. Component of the XPC complex composed of XPC, RAD23B and CETN2. Component of the nuclear pore complex (NPC)-associated TREX-2 complex (transcription and export complex 2), composed of at least GANP, 2 copies of ENY2, PCID2, SEM1/DSS1, and either centrin CETN2 or centrin CETN3. The TREX-2 complex also associates with ALYREF/ALY and with the nucleoporin NUP153. Interacts with USP49. Forms a microtubule-associated complex with POC5, POC1B and FAM161A. Interacts with CCDC15. Ubiquitously expressed in all adult tissues tested, with strongest expression in brain, spleen, kidney, small intestine and ovary. Also expressed in the NIH 3T3 fibroblast cell line and peripheral blood lymphocytes.

It localises to the cytoplasm. The protein localises to the cytoskeleton. Its subcellular location is the microtubule organizing center. It is found in the centrosome. The protein resides in the centriole. It localises to the nucleus. The protein localises to the nucleus envelope. Its subcellular location is the nuclear pore complex. Its function is as follows. Plays a fundamental role in microtubule organizing center structure and function. Required for centriole duplication and correct spindle formation. Has a role in regulating cytokinesis and genome stability via cooperation with CALM1 and CCP110. Functionally, involved in global genome nucleotide excision repair (GG-NER) by acting as component of the XPC complex. Cooperatively with Rad23b appears to stabilize Xpc. In vitro, stimulates DNA binding of the Xpc:Rad23b dimer. In terms of biological role, the XPC complex is proposed to represent the first factor bound at the sites of DNA damage and together with other core recognition factors, Xpa, RPA and the TFIIH complex, is part of the pre-incision (or initial recognition) complex. The XPC complex recognizes a wide spectrum of damaged DNA characterized by distortions of the DNA helix such as single-stranded loops, mismatched bubbles or single-stranded overhangs. The orientation of XPC complex binding appears to be crucial for inducing a productive NER. XPC complex is proposed to recognize and to interact with unpaired bases on the undamaged DNA strand which is followed by recruitment of the TFIIH complex and subsequent scanning for lesions in the opposite strand in a 5'-to-3' direction by the NER machinery. Cyclobutane pyrimidine dimers (CPDs) which are formed upon UV-induced DNA damage esacpe detection by the XPC complex due to a low degree of structural perurbation. Instead they are detected by the UV-DDB complex which in turn recruits and cooperates with the XPC complex in the respective DNA repair. As a component of the TREX-2 complex, involved in the export of mRNAs to the cytoplasm through the nuclear pores. In Mus musculus (Mouse), this protein is Centrin-2 (Cetn2).